Reading from the N-terminus, the 2184-residue chain is Genome polyprotein (2184 aa).

Gly-2 carries N-myristoyl glycine; by host lipidation. Residues Gly-2–Gln-1494 lie on the Cytoplasmic side of the membrane. The segment at Phe-567 to Val-583 is amphipathic alpha-helix. Active-site for protease 2A activity residues include His-871 and Asp-889. The Zn(2+) site is built by Cys-906 and Cys-908. Cys-960 functions as the For protease 2A activity in the catalytic mechanism. Residues Cys-966 and His-968 each contribute to the Zn(2+) site. Residues Asn-1100 to Gln-1172 form a membrane-binding region. Residues Asn-1100–Thr-1238 form an oligomerization region. An RNA-binding region spans residues Ala-1121 to Gln-1125. The 157-residue stretch at Glu-1204–Asn-1360 folds into the SF3 helicase domain. Positions 1368, 1380, and 1385 each coordinate Zn(2+). Residues Cys-1368 to Cys-1385 form a C4-type; degenerate zinc finger. An RNA-binding region spans residues Glu-1412 to Val-1419. Residues Leu-1423 to Gln-1428 form an oligomerization region. Residues Ala-1495 to Tyr-1510 lie within the membrane without spanning it. Topologically, residues Lys-1511–Phe-2184 are cytoplasmic. Tyr-1520 carries the post-translational modification O-(5'-phospho-RNA)-tyrosine. The 179-residue stretch at Gly-1540–Phe-1718 folds into the Peptidase C3 domain. Catalysis depends on for protease 3C activity residues His-1579, Glu-1610, and Cys-1686. One can recognise a RdRp catalytic domain in the interval Gly-1949–Leu-2065. Residues Asp-1955 and Asp-2051 each coordinate Mg(2+).

Belongs to the picornaviruses polyprotein family. Interacts with capsid protein VP1 and capsid protein VP3 to form heterotrimeric protomers. As to quaternary structure, interacts with capsid protein VP0, and capsid protein VP3 to form heterotrimeric protomers. Five protomers subsequently associate to form pentamers which serve as building blocks for the capsid. Interacts with capsid protein VP2, capsid protein VP3 and capsid protein VP4 following cleavage of capsid protein VP0. In terms of assembly, interacts with capsid protein VP1 and capsid protein VP3 in the mature capsid. Interacts with capsid protein VP0 and capsid protein VP1 to form heterotrimeric protomers. Five protomers subsequently associate to form pentamers which serve as building blocks for the capsid. Interacts with capsid protein VP4 in the mature capsid. Interacts with protein 2C; this interaction may be important for virion morphogenesis. As to quaternary structure, interacts with capsid protein VP1 and capsid protein VP3. In terms of assembly, homodimer. Homohexamer; forms a hexameric ring structure with 6-fold symmetry characteristic of AAA+ ATPases. Interacts (via N-terminus) with host RTN3 (via reticulon domain); this interaction is important for viral replication. Interacts with capsid protein VP3; this interaction may be important for virion morphogenesis. As to quaternary structure, interacts with protein 3CD. In terms of assembly, homodimer. Interacts with host GBF1. Interacts (via GOLD domain) with host ACBD3 (via GOLD domain); this interaction allows the formation of a viral protein 3A/ACBD3 heterotetramer with a 2:2 stoichiometry, which will stimulate the recruitment of host PI4KB in order to synthesize PI4P at the viral RNA replication sites. Interacts with RNA-directed RNA polymerase. As to quaternary structure, interacts with protein 3AB and with RNA-directed RNA polymerase. In terms of assembly, interacts with Viral protein genome-linked and with protein 3CD. Requires Mg(2+) as cofactor. Post-translationally, specific enzymatic cleavages in vivo by the viral proteases yield processing intermediates and the mature proteins. Myristoylation is required for the formation of pentamers during virus assembly. Further assembly of 12 pentamers and a molecule of genomic RNA generates the provirion. In terms of processing, during virion maturation, immature virions are rendered infectious following cleavage of VP0 into VP4 and VP2. This maturation seems to be an autocatalytic event triggered by the presence of RNA in the capsid and it is followed by a conformational change infectious virion. Post-translationally, myristoylation is required during RNA encapsidation and formation of the mature virus particle. VPg is uridylylated by the polymerase into VPg-pUpU. This acts as a nucleotide-peptide primer for the genomic RNA replication.

It localises to the virion. The protein localises to the host cytoplasm. It is found in the host cytoplasmic vesicle membrane. Its subcellular location is the host nucleus. The catalysed reaction is a ribonucleoside 5'-triphosphate + H2O = a ribonucleoside 5'-diphosphate + phosphate + H(+). The enzyme catalyses Selective cleavage of Tyr-|-Gly bond in the picornavirus polyprotein.. It carries out the reaction RNA(n) + a ribonucleoside 5'-triphosphate = RNA(n+1) + diphosphate. It catalyses the reaction Selective cleavage of Gln-|-Gly bond in the poliovirus polyprotein. In other picornavirus reactions Glu may be substituted for Gln, and Ser or Thr for Gly.. With respect to regulation, replication or transcription is subject to high level of random mutations by the nucleotide analog ribavirin. In terms of biological role, forms an icosahedral capsid of pseudo T=3 symmetry with capsid proteins VP2 and VP3. The capsid is 300 Angstroms in diameter, composed of 60 copies of each capsid protein and enclosing the viral positive strand RNA genome. Capsid protein VP1 mainly forms the vertices of the capsid. Capsid protein VP1 interacts with host ITGA2/ITGB1 to provide virion attachment to target host cells. This attachment induces virion internalization predominantly through caveolin-mediated endocytosis. Tyrosine kinases are probably involved in the entry process. After binding to its receptor, the capsid undergoes conformational changes. Capsid protein VP1 N-terminus (that contains an amphipathic alpha-helix) and capsid protein VP4 are externalized. Together, they shape a pore in the host membrane through which viral genome is translocated to host cell cytoplasm. Its function is as follows. Forms an icosahedral capsid of pseudo T=3 symmetry with capsid proteins VP2 and VP3. The capsid is 300 Angstroms in diameter, composed of 60 copies of each capsid protein and enclosing the viral positive strand RNA genome. Lies on the inner surface of the capsid shell. After binding to the host receptor, the capsid undergoes conformational changes. Capsid protein VP4 is released, Capsid protein VP1 N-terminus is externalized, and together, they shape a pore in the host membrane through which the viral genome is translocated into the host cell cytoplasm. Functionally, component of immature procapsids, which is cleaved into capsid proteins VP4 and VP2 after maturation. Allows the capsid to remain inactive before the maturation step. In terms of biological role, cysteine protease that cleaves viral polyprotein and specific host proteins. It is responsible for the autocatalytic cleavage between the P1 and P2 regions, which is the first cleavage occurring in the polyprotein. Also cleaves the host translation initiation factor EIF4G1, in order to shut down the capped cellular mRNA translation. Inhibits the host nucleus-cytoplasm protein and RNA trafficking by cleaving host members of the nuclear pores. Counteracts stress granule formation probably by antagonizing its assembly or promoting its dissassembly. Its function is as follows. Plays an essential role in the virus replication cycle by acting as a viroporin. Creates a pore in the host endoplasmic reticulum and as a consequence releases Ca2+ in the cytoplasm of infected cell. In turn, high levels of cytoplasmic calcium may trigger membrane trafficking and transport of viral ER-associated proteins to viroplasms, sites of viral genome replication. Induces and associates with structural rearrangements of intracellular membranes. Displays RNA-binding, nucleotide binding and NTPase activities. May play a role in virion morphogenesis and viral RNA encapsidation by interacting with the capsid protein VP3. Functionally, localizes the viral replication complex to the surface of membranous vesicles. Together with protein 3CD binds the Cis-Active RNA Element (CRE) which is involved in RNA synthesis initiation. Acts as a cofactor to stimulate the activity of 3D polymerase, maybe through a nucleid acid chaperone activity. In terms of biological role, localizes the viral replication complex to the surface of membranous vesicles. It inhibits host cell endoplasmic reticulum-to-Golgi apparatus transport and causes the disassembly of the Golgi complex, possibly through GBF1 interaction. This would result in depletion of MHC, trail receptors and IFN receptors at the host cell surface. Plays an essential role in viral RNA replication by recruiting ACBD3 and PI4KB at the viral replication sites, thereby allowing the formation of the rearranged membranous structures where viral replication takes place. Its function is as follows. Acts as a primer for viral RNA replication and remains covalently bound to viral genomic RNA. VPg is uridylylated prior to priming replication into VPg-pUpU. The oriI viral genomic sequence may act as a template for this. The VPg-pUpU is then used as primer on the genomic RNA poly(A) by the RNA-dependent RNA polymerase to replicate the viral genome. During genome replication, the VPg-RNA linkage is removed by the host TDP2, thereby accelerating replication. During the late stage of the replication cycle, host TDP2 is excluded from sites of viral RNA synthesis and encapsidation, allowing for the generation of progeny virions. Involved in the viral replication complex and viral polypeptide maturation. It exhibits protease activity with a specificity and catalytic efficiency that is different from protease 3C. Protein 3CD lacks polymerase activity. Protein 3CD binds to the 5'UTR of the viral genome. Functionally, replicates the viral genomic RNA on the surface of intracellular membranes. May form linear arrays of subunits that propagate along a strong head-to-tail interaction called interface-I. Covalently attaches UMP to a tyrosine of VPg, which is used to prime RNA synthesis. The positive stranded RNA genome is first replicated at virus induced membranous vesicles, creating a dsRNA genomic replication form. This dsRNA is then used as template to synthesize positive stranded RNA genomes. ss(+)RNA genomes are either translated, replicated or encapsidated. In terms of biological role, major viral protease that mediates proteolytic processing of the polyprotein. Cleaves host EIF5B, contributing to host translation shutoff. Also cleaves host PABPC1, contributing to host translation shutoff. Cleaves host NLRP1, triggers host N-glycine-mediated degradation of the autoinhibitory NLRP1 N-terminal fragment. The sequence is that of Genome polyprotein from Homo sapiens (Human).